The primary structure comprises 439 residues: 3-phosphoshikimate 1-carboxyvinyltransferase (439 aa).

3-phosphoshikimate contacts are provided by lysine 29, serine 30, and arginine 34. Lysine 29 lines the phosphoenolpyruvate pocket. 2 residues coordinate phosphoenolpyruvate: glycine 100 and arginine 128. 6 residues coordinate 3-phosphoshikimate: serine 173, serine 174, glutamine 175, serine 201, aspartate 321, and lysine 348. Residue glutamine 175 coordinates phosphoenolpyruvate. The active-site Proton acceptor is the aspartate 321. The phosphoenolpyruvate site is built by arginine 352 and arginine 395.

Belongs to the EPSP synthase family. In terms of assembly, monomer.

The protein localises to the cytoplasm. The enzyme catalyses 3-phosphoshikimate + phosphoenolpyruvate = 5-O-(1-carboxyvinyl)-3-phosphoshikimate + phosphate. It functions in the pathway metabolic intermediate biosynthesis; chorismate biosynthesis. Its function is as follows. Catalyzes the transfer of the enolpyruvyl moiety of phosphoenolpyruvate (PEP) to the 5-hydroxyl of shikimate-3-phosphate (S3P) to produce enolpyruvyl shikimate-3-phosphate and inorganic phosphate. The protein is 3-phosphoshikimate 1-carboxyvinyltransferase of Halobacterium salinarum (strain ATCC 700922 / JCM 11081 / NRC-1) (Halobacterium halobium).